We begin with the raw amino-acid sequence, 859 residues long: Rod cGMP-specific 3',5'-cyclic phosphodiesterase subunit alpha (859 aa).

At Gly2 the chain carries N-acetylglycine. GAF domains are found at residues 73–222 (QAEK…NLIM) and 254–431 (DIER…GWSV). Residues 483 to 816 (EEEELAEILQ…KEWKALADEY (334 aa)) enclose the PDEase domain. His559 serves as the catalytic Proton donor. Residues His563, His599, Asp600, and Asp720 each coordinate a divalent metal cation. The disordered stretch occupies residues 823-859 (LEEEKQKQQAAKQAASGNQPGGNPLQGAPASKSCCIQ). Cys856 carries the cysteine methyl ester modification. Cys856 carries the S-farnesyl cysteine lipid modification. Residues 857-859 (CIQ) constitute a propeptide, removed in mature form.

Belongs to the cyclic nucleotide phosphodiesterase family. In terms of assembly, oligomer composed of two catalytic chains (alpha and beta), an inhibitory chain (gamma) and the delta chain. It depends on a divalent metal cation as a cofactor.

The protein resides in the cell membrane. The protein localises to the cell projection. It localises to the cilium. It is found in the photoreceptor outer segment. It catalyses the reaction 3',5'-cyclic GMP + H2O = GMP + H(+). Functionally, rod-specific cGMP phosphodiesterase that catalyzes the hydrolysis of 3',5'-cyclic GMP. This protein participates in processes of transmission and amplification of the visual signal. The chain is Rod cGMP-specific 3',5'-cyclic phosphodiesterase subunit alpha from Mus musculus (Mouse).